The primary structure comprises 97 residues: U-scoloptoxin(10)-Sa2a (97 aa).

A signal peptide spans 1-23 (MNKSMLIFFTILFLTYIIEEKEA).

The protein belongs to the scoloptoxin-10 family. Contains 3 disulfide bonds. Expressed by the venom gland.

It is found in the secreted. The chain is U-scoloptoxin(10)-Sa2a from Scolopendra alternans (Florida Keys giant centipede).